The following is a 274-amino-acid chain: MEWSQELWLLIKYLLLGLFQGFTEPIPVSSSGHLVLLQHFLGIEIEGLSFEVMVNFASLFAVIAIYRFDLLKLVKGSARYVLYQDAQGKGDFRISFYLLLATVPAVLAALLFKDWIETELKQLHVIAFALLITGMALWLIRHLNGRKQDGDITLKDALLVGLAQTAALIPGISRSGATIVAAMGLGWRQETALRFSFFLYIPISLGSGVLAISDIVQDPHFTALWIPYTIAFIGSFIASYVSLLWFMNIMRHGKLIYFALYCWLAGLIVLSLLS.

The next 7 membrane-spanning stretches (helical) occupy residues 8–28 (WLLIKYLLLGLFQGFTEPIPV), 45–65 (IEGLSFEVMVNFASLFAVIAI), 92–112 (FRISFYLLLATVPAVLAALLF), 120–140 (LKQLHVIAFALLITGMALWLI), 195–215 (FSFFLYIPISLGSGVLAISDI), 230–250 (IAFIGSFIASYVSLLWFMNIM), and 253–273 (GKLIYFALYCWLAGLIVLSLL).

The protein belongs to the UppP family.

It is found in the cell membrane. The enzyme catalyses di-trans,octa-cis-undecaprenyl diphosphate + H2O = di-trans,octa-cis-undecaprenyl phosphate + phosphate + H(+). Functionally, catalyzes the dephosphorylation of undecaprenyl diphosphate (UPP). Confers resistance to bacitracin. The polypeptide is Undecaprenyl-diphosphatase 1 (Halalkalibacterium halodurans (strain ATCC BAA-125 / DSM 18197 / FERM 7344 / JCM 9153 / C-125) (Bacillus halodurans)).